The following is a 106-amino-acid chain: Toxin-like structure LSTX-D4 (106 aa).

An N-terminal signal peptide occupies residues 1-20 (MMKVLVVVALLVTLISYSSS). A propeptide spanning residues 21-41 (EGIGDLEADELLSLMANEQTR) is cleaved from the precursor. Cystine bridges form between cysteine 45-cysteine 60, cysteine 52-cysteine 69, cysteine 59-cysteine 85, and cysteine 71-cysteine 83.

It belongs to the neurotoxin 19 (CSTX) family. 02 (D7) subfamily. In terms of tissue distribution, expressed by the venom gland.

It localises to the secreted. The polypeptide is Toxin-like structure LSTX-D4 (Lycosa singoriensis (Wolf spider)).